We begin with the raw amino-acid sequence, 352 residues long: Dolichol-phosphate mannosyltransferase (352 aa).

Residues 1–229 are Cytoplasmic-facing; it reads MKVSVIIPTY…HIYRLMKWEG (229 aa). Residues P8, Y10, E12, V37, D39, D89, A90, D91, Q93, R117, V156, K178, R202, and K208 each contribute to the GDP-alpha-D-mannose site. Mg(2+)-binding residues include D91 and Q93. Residues D91 and Q93 each coordinate Mn(2+). Residues 230–256 traverse the membrane as a helical segment; it reads EIDRIVKFSIVGLSGILVNEGFLWLFV. Topologically, residues 257–261 are extracellular; the sequence is NLGIP. The chain crosses the membrane as a helical span at residues 262-286; sequence KEIAVIPAVELSILNNFFWNDIWTF. Residues 287 to 293 lie on the Cytoplasmic side of the membrane; that stretch reads KDIRRGS. A helical transmembrane segment spans residues 294–320; it reads IFSRLLKFHIAALSGAVVNFIVYWILL. At 321–325 the chain is on the extracellular side; it reads FLGIH. A helical membrane pass occupies residues 326 to 350; it reads YLIANLVGIVLSFGVRYVINRHVTW. Residues 351–352 lie on the Cytoplasmic side of the membrane; it reads AT.

Belongs to the glycosyltransferase 2 family. The cofactor is Mg(2+). Mn(2+) is required as a cofactor. Requires Ca(2+) as cofactor.

The protein resides in the cell membrane. The enzyme catalyses a di-trans,poly-cis-dolichyl phosphate + GDP-alpha-D-mannose = a di-trans,poly-cis-dolichyl beta-D-mannosyl phosphate + GDP. It functions in the pathway protein modification; protein glycosylation. In terms of biological role, transfers mannose from GDP-mannose to dolichol monophosphate to form dolichol phosphate mannose (Dol-P-Man) which is the mannosyl donor in pathways leading to N-glycosylation, glycosyl phosphatidylinositol membrane anchoring, and O-mannosylation of proteins. In Pyrococcus furiosus (strain ATCC 43587 / DSM 3638 / JCM 8422 / Vc1), this protein is Dolichol-phosphate mannosyltransferase.